The chain runs to 280 residues: UDP-3-O-acyl-N-acetylglucosamine deacetylase (280 aa).

His77, His238, and Asp242 together coordinate Zn(2+). Catalysis depends on His265, which acts as the Proton donor.

This sequence belongs to the LpxC family. Zn(2+) serves as cofactor.

It catalyses the reaction a UDP-3-O-[(3R)-3-hydroxyacyl]-N-acetyl-alpha-D-glucosamine + H2O = a UDP-3-O-[(3R)-3-hydroxyacyl]-alpha-D-glucosamine + acetate. The protein operates within glycolipid biosynthesis; lipid IV(A) biosynthesis; lipid IV(A) from (3R)-3-hydroxytetradecanoyl-[acyl-carrier-protein] and UDP-N-acetyl-alpha-D-glucosamine: step 2/6. Functionally, catalyzes the hydrolysis of UDP-3-O-myristoyl-N-acetylglucosamine to form UDP-3-O-myristoylglucosamine and acetate, the committed step in lipid A biosynthesis. The sequence is that of UDP-3-O-acyl-N-acetylglucosamine deacetylase from Trichormus variabilis (strain ATCC 29413 / PCC 7937) (Anabaena variabilis).